The primary structure comprises 143 residues: Lysozyme C (143 aa).

Positions 1–15 are cleaved as a signal peptide; the sequence is MKIPVFLLLLALANA. The C-type lysozyme domain maps to 16 to 143; it reads KVFQRCEWAR…LSAYIAGCGL (128 aa). 4 disulfides stabilise this stretch: C21–C141, C45–C129, C79–C94, and C90–C108. Catalysis depends on residues E50 and D67.

The protein belongs to the glycosyl hydrolase 22 family. In terms of assembly, monomer.

It is found in the secreted. The enzyme catalyses Hydrolysis of (1-&gt;4)-beta-linkages between N-acetylmuramic acid and N-acetyl-D-glucosamine residues in a peptidoglycan and between N-acetyl-D-glucosamine residues in chitodextrins.. Lysozymes have primarily a bacteriolytic function; those in tissues and body fluids are associated with the monocyte-macrophage system and enhance the activity of immunoagents. The chain is Lysozyme C from Takifugu rubripes (Japanese pufferfish).